We begin with the raw amino-acid sequence, 190 residues long: uncharacterized protein (190 aa).

This sequence belongs to the Iojap/RsfS family.

This is an uncharacterized protein from Caenorhabditis elegans.